A 56-amino-acid polypeptide reads, in one-letter code: Large ribosomal subunit protein bL32 (56 aa).

The tract at residues 1 to 34 is disordered; that stretch reads MAVQQNKKSRSKRGMRRSHDSLSTAQLSVDATSG. The span at 7 to 16 shows a compositional bias: basic residues; that stretch reads KKSRSKRGMR. Positions 21–31 are enriched in polar residues; the sequence is SLSTAQLSVDA.

It belongs to the bacterial ribosomal protein bL32 family.

This chain is Large ribosomal subunit protein bL32, found in Shewanella frigidimarina (strain NCIMB 400).